The sequence spans 448 residues: Divalent metal cation transporter MntH (448 aa).

Helical transmembrane passes span 41–61, 69–89, 117–137, 147–167, 176–196, 215–235, 270–290, 307–327, 363–383, 384–404, and 424–444; these read LFAFMGPGALIAVGYVDPGNW, SEFGYTLLSVILISNILAVLL, GFVLWILAELAIIATDIAEVI, FGIPLIWGVCITALDIFLVLF, IEVIVITLMVTILVCFGAEMV, IVTNPAMLYIALGILGATVMP, FSLTIALLINASILILAAAAF, LLNPTLGSSIASTVFAVALLA, VLAIVPAVIITALYGANGINE, LLIFSQVILSMQLSFAVIPLV, and IVSWSVAIFIAFLNIYLLFYT.

Belongs to the NRAMP family.

It is found in the cell membrane. Functionally, h(+)-stimulated, divalent metal cation uptake system. The polypeptide is Divalent metal cation transporter MntH (Listeria innocua serovar 6a (strain ATCC BAA-680 / CLIP 11262)).